The primary structure comprises 389 residues: Large envelope protein (389 aa).

The residue at position 1 (Met1) is an N-acetylmethionine. Gly2 is lipidated: N-myristoyl glycine; by host. A pre-S1 region spans residues 2-108 (GQNLSVTNPL…PPLRDTHPQA (107 aa)). Residues 2–163 (GQNLSVTNPL…FLKTGDPALN (162 aa)) form a pre-S region. Topologically, residues 2–170 (GQNLSVTNPL…ALNMESISSG (169 aa)) are virion surface; in external conformation. At 2 to 242 (GQNLSVTNPL…PGYRWMCLRR (241 aa)) the chain is on the intravirion; in internal conformation side. Residues 78–105 (PAVPPPASTNRQSGRRPTPISPPLRDTH) are disordered. The interval 109–163 (MQWNSTVFHQALQDPRVRGLYFPAGGSSSGTVSPVPTTASPISSTFLKTGDPALN) is pre-S2. A helical transmembrane segment spans residues 171 to 191 (FLGPLLVLQAGFFLLTKILTI). Residues 192–242 (PQSLDSWWTSLNFLGGAPVCPGQNSQSLTSNHSPTSCPPICPGYRWMCLRR) lie on the Intravirion; in external conformation side of the membrane. The helical transmembrane segment at 243 to 263 (FIIFLFILLLCLIFLLVLLDY) threads the bilayer. Residues 264 to 337 (RGMLPVCPLL…WASVRFSWLN (74 aa)) are Virion surface-facing. The N-linked (GlcNAc...) asparagine; by host glycan is linked to Asn309. A helical membrane pass occupies residues 338–358 (LLVPFVQWFAGLSPTVWLSVI). At 359–364 (WMIWYW) the chain is on the intravirion side. Residues 365–387 (GPSLYNILSPFIPLLPIFFCLWA) form a helical membrane-spanning segment. The Virion surface portion of the chain corresponds to 388–389 (YI).

Belongs to the orthohepadnavirus major surface antigen family. In terms of assembly, in its internal form (Li-HBsAg), interacts with the capsid protein and with the isoform S. Interacts with host chaperone CANX. As to quaternary structure, associates with host chaperone CANX through its pre-S2 N glycan; this association may be essential for isoform M proper secretion. Interacts with isoform L. Interacts with the antigens of satellite virus HDV (HDVAgs); this interaction is required for encapsidation of HDV genomic RNA. In terms of processing, isoform M is N-terminally acetylated by host at a ratio of 90%, and N-glycosylated by host at the pre-S2 region. Post-translationally, myristoylated.

The protein resides in the virion membrane. Its function is as follows. The large envelope protein exists in two topological conformations, one which is termed 'external' or Le-HBsAg and the other 'internal' or Li-HBsAg. In its external conformation the protein attaches the virus to cell receptors and thereby initiating infection. This interaction determines the species specificity and liver tropism. This attachment induces virion internalization predominantly through caveolin-mediated endocytosis. The large envelope protein also assures fusion between virion membrane and endosomal membrane. In its internal conformation the protein plays a role in virion morphogenesis and mediates the contact with the nucleocapsid like a matrix protein. The middle envelope protein plays an important role in the budding of the virion. It is involved in the induction of budding in a nucleocapsid independent way. In this process the majority of envelope proteins bud to form subviral lipoprotein particles of 22 nm of diameter that do not contain a nucleocapsid. In Pongo pygmaeus (Bornean orangutan), this protein is Large envelope protein.